Consider the following 115-residue polypeptide: Large ribosomal subunit protein bL20 (115 aa).

The protein belongs to the bacterial ribosomal protein bL20 family.

Functionally, binds directly to 23S ribosomal RNA and is necessary for the in vitro assembly process of the 50S ribosomal subunit. It is not involved in the protein synthesizing functions of that subunit. This chain is Large ribosomal subunit protein bL20, found in Pelodictyon phaeoclathratiforme (strain DSM 5477 / BU-1).